Consider the following 633-residue polypeptide: Chaperone protein dnaK2 (633 aa).

T197 is subject to Phosphothreonine; by autocatalysis. The interval S600 to K633 is disordered. Residues D608–E619 are compositionally biased toward low complexity. Residues G620–K633 show a composition bias toward acidic residues.

The protein belongs to the heat shock protein 70 family.

Its function is as follows. Acts as a chaperone. This is Chaperone protein dnaK2 (dnaK2) from Prochlorococcus marinus (strain SARG / CCMP1375 / SS120).